A 335-amino-acid polypeptide reads, in one-letter code: Aspartate--ammonia ligase (335 aa).

The protein belongs to the class-II aminoacyl-tRNA synthetase family. AsnA subfamily.

The protein localises to the cytoplasm. It carries out the reaction L-aspartate + NH4(+) + ATP = L-asparagine + AMP + diphosphate + H(+). The protein operates within amino-acid biosynthesis; L-asparagine biosynthesis; L-asparagine from L-aspartate (ammonia route): step 1/1. The polypeptide is Aspartate--ammonia ligase (Levilactobacillus brevis (strain ATCC 367 / BCRC 12310 / CIP 105137 / JCM 1170 / LMG 11437 / NCIMB 947 / NCTC 947) (Lactobacillus brevis)).